Reading from the N-terminus, the 355-residue chain is tRNA N6-adenosine threonylcarbamoyltransferase (355 aa).

Positions 113 and 117 each coordinate Fe cation. Substrate contacts are provided by residues L135 to G139, D168, G181, and N279. Fe cation is bound at residue D307.

Belongs to the KAE1 / TsaD family. It depends on Fe(2+) as a cofactor.

It is found in the cytoplasm. It catalyses the reaction L-threonylcarbamoyladenylate + adenosine(37) in tRNA = N(6)-L-threonylcarbamoyladenosine(37) in tRNA + AMP + H(+). Its function is as follows. Required for the formation of a threonylcarbamoyl group on adenosine at position 37 (t(6)A37) in tRNAs that read codons beginning with adenine. Is involved in the transfer of the threonylcarbamoyl moiety of threonylcarbamoyl-AMP (TC-AMP) to the N6 group of A37, together with TsaE and TsaB. TsaD likely plays a direct catalytic role in this reaction. The protein is tRNA N6-adenosine threonylcarbamoyltransferase of Bradyrhizobium sp. (strain BTAi1 / ATCC BAA-1182).